The chain runs to 475 residues: MHRGDKPVNIEVAEPITVEVLDLDAQGIARLAPSEEEAAQDQSGKVIFIKGALPTELVTYTVTSDKSRFSKAKVREILKPAVFRAEPKCAAFGICGGCTMQHLDIRAQVAMKQRVLEDDLQHIAKVKSEEILCPMGGPTWEYRHRARLSAVNRSIKKGTVLIGFHEGKSGYVADMLACEILPKHVSDLLPEMRKLVMGLSIVDRMPQIEIAIGEPEDAQSDDPQKSKPVTALVFRNLKPLTTEDEQLLRAFADQHEVWIWLQPKGIETIAPFYPLTGKLCYRLPEFEIEMPFKPCDFTQVNHMMNRALVSRAIRLLEVQPTDRVLDLFCGIGNFTLPLARKAKQVLGIEGLESLTARAKSNAQHNGLSDKASFMQSDLFEVTSETVASWGGAERWLMDPPRKGAMDICKALAELHLQQSDLLPERIVYVSCNPKTLARDVEILCHQAGYRLSSAGIINMFPHTSHVESMVVFDRA.

One can recognise a TRAM domain in the interval 1-76; it reads MHRGDKPVNI…SRFSKAKVRE (76 aa). 4 residues coordinate [4Fe-4S] cluster: Cys-89, Cys-95, Cys-98, and Cys-178. 6 residues coordinate S-adenosyl-L-methionine: Gln-299, Phe-328, Asn-333, Glu-349, Asp-377, and Asp-398. The Nucleophile role is filled by Cys-431.

This sequence belongs to the class I-like SAM-binding methyltransferase superfamily. RNA M5U methyltransferase family. RlmD subfamily.

The enzyme catalyses uridine(1939) in 23S rRNA + S-adenosyl-L-methionine = 5-methyluridine(1939) in 23S rRNA + S-adenosyl-L-homocysteine + H(+). Functionally, catalyzes the formation of 5-methyl-uridine at position 1939 (m5U1939) in 23S rRNA. The polypeptide is 23S rRNA (uracil(1939)-C(5))-methyltransferase RlmD (Polynucleobacter necessarius subsp. necessarius (strain STIR1)).